The primary structure comprises 179 residues: Cytochrome b6-f complex iron-sulfur subunit (179 aa).

The chain crosses the membrane as a helical span at residues 21 to 43 (LLTFGTVTGVALGALYPVVNYFI). The Rieske domain maps to 61–162 (GNDVSVTKFL…TNVSDDKIVL (102 aa)). [2Fe-2S] cluster-binding residues include C108, H110, C126, and H129. C113 and C128 form a disulfide bridge.

This sequence belongs to the Rieske iron-sulfur protein family. In terms of assembly, the 4 large subunits of the cytochrome b6-f complex are cytochrome b6, subunit IV (17 kDa polypeptide, PetD), cytochrome f and the Rieske protein, while the 4 small subunits are PetG, PetL, PetM and PetN. The complex functions as a dimer. [2Fe-2S] cluster serves as cofactor.

It is found in the cellular thylakoid membrane. The enzyme catalyses 2 oxidized [plastocyanin] + a plastoquinol + 2 H(+)(in) = 2 reduced [plastocyanin] + a plastoquinone + 4 H(+)(out). Functionally, component of the cytochrome b6-f complex, which mediates electron transfer between photosystem II (PSII) and photosystem I (PSI), cyclic electron flow around PSI, and state transitions. The polypeptide is Cytochrome b6-f complex iron-sulfur subunit (Nostoc punctiforme (strain ATCC 29133 / PCC 73102)).